The chain runs to 396 residues: (S)-8-oxocitronellyl enol synthase ISY2 (396 aa).

NADP(+)-binding positions include 38 to 40, 66 to 67, 84 to 85, 108 to 109, Gln146, Tyr182, Ile209, and 216 to 218; these read TGL, RR, DV, TW, and SMM. The active site involves Tyr182.

Belongs to the short-chain dehydrogenases/reductases (SDR) family.

It catalyses the reaction (S)-8-oxocitronellyl enol + NADP(+) = (6E)-8-oxogeranial + NADPH + H(+). It carries out the reaction (S)-8-oxocitronellyl enol + NAD(+) = (6E)-8-oxogeranial + NADH + H(+). In terms of biological role, iridoid synthase that catalyzes the first step in generation of the iridoid ring scaffold using the linear monoterpene (6E)-8-oxogeranial as substrate. Iridoids comprise a large family of distinctive bicyclic monoterpenes that possess a wide range of pharmacological activities, including anticancer, anti-inflammatory, antifungal and antibacterial activities. Catalyzes the conversion of the linear monoterpene (6E)-8-oxogeranial to (S)-8-oxocitronellyl enol, a precursor of nepetalactones, which are metabolites that are both insect-repellent and have euphoric effect in cats. The chain is (S)-8-oxocitronellyl enol synthase ISY2 from Nepeta racemosa (Catmint).